Here is a 608-residue protein sequence, read N- to C-terminus: Sensor protein kinase WalK (608 aa).

The next 2 membrane-spanning stretches (helical) occupy residues 14–34 (LVIV…LYFT) and 183–203 (IFIV…FFIA). In terms of domain architecture, HAMP spans 204–256 (RTITKPITDMRNQTVEMSRGNYTQRVKIYGNDEIGELALAFNNLSKRVQEAQA). Positions 261 to 331 (EKRRLDSVIT…EIQENNDSFL (71 aa)) constitute a PAS domain. Zn(2+) contacts are provided by H271, D274, H364, and E368. The PAC domain occupies 314 to 378 (LEDEFKLEEI…QQQVERERRE (65 aa)). One can recognise a Histidine kinase domain in the interval 382-600 (NVSHELRTPL…SIFITLPCEV (219 aa)). H385 bears the Phosphohistidine; by autocatalysis mark.

In terms of assembly, forms homodimers. Forms homooligomers. Autophosphorylated.

It localises to the cell membrane. It catalyses the reaction ATP + protein L-histidine = ADP + protein N-phospho-L-histidine.. With respect to regulation, by zinc. Zinc-binding negatively regulates WalK kinase activity and thus autophosphorylation. Member of the two-component regulatory system WalK/WalR that regulates genes involved in cell wall metabolism, virulence regulation, biofilm production, oxidative stress resistance and antibiotic resistance via direct or indirect regulation of autolysins. Functions as a sensor protein kinase which is autophosphorylated at a histidine residue in the dimerization domain and transfers its phosphate group to the conserved aspartic acid residue in the regulatory domain of WalR. In turn, WalR binds to the upstream promoter regions of the target genes to positively and negatively regulate their expression. This is Sensor protein kinase WalK (walK) from Staphylococcus aureus (strain Newman).